Here is a 372-residue protein sequence, read N- to C-terminus: Ligninase C (372 aa).

Positions 1-26 are cleaved as a signal peptide; it reads MAFKSLLSFVSVIGALQGANAALTRR. Catalysis depends on His-74, which acts as the Proton acceptor. Residues Asp-75, Gly-93, Asp-95, and Ser-97 each coordinate Ca(2+). An N-linked (GlcNAc...) asparagine glycan is attached at Asn-129. His-205 is a binding site for heme b. Residues Thr-206, Asp-223, Thr-225, Leu-228, and Asp-230 each contribute to the Ca(2+) site. The tract at residues 346–372 is disordered; it reads TPFPTFPTDPGPKTAVAPVPKPPAARK.

It belongs to the peroxidase family. Ligninase subfamily. Requires Ca(2+) as cofactor. It depends on heme b as a cofactor.

It catalyses the reaction 1-(3,4-dimethoxyphenyl)-2-(2-methoxyphenoxy)propane-1,3-diol + H2O2 = 3,4-dimethoxybenzaldehyde + guaiacol + glycolaldehyde + H2O. The enzyme catalyses 2 (3,4-dimethoxyphenyl)methanol + H2O2 = 2 (3,4-dimethoxyphenyl)methanol radical + 2 H2O. It functions in the pathway secondary metabolite metabolism; lignin degradation. Its function is as follows. Depolymerization of lignin. Catalyzes the C(alpha)-C(beta) cleavage of the propyl side chains of lignin. This is Ligninase C from Trametes versicolor (White-rot fungus).